We begin with the raw amino-acid sequence, 620 residues long: 1-deoxy-D-xylulose-5-phosphate synthase (620 aa).

Thiamine diphosphate-binding positions include His-80 and 121–123 (GHS). Asp-152 is a binding site for Mg(2+). Thiamine diphosphate is bound by residues 153–154 (GA), Asn-181, Tyr-288, and Glu-370. Asn-181 is a binding site for Mg(2+).

This sequence belongs to the transketolase family. DXPS subfamily. Homodimer. Requires Mg(2+) as cofactor. Thiamine diphosphate is required as a cofactor.

It catalyses the reaction D-glyceraldehyde 3-phosphate + pyruvate + H(+) = 1-deoxy-D-xylulose 5-phosphate + CO2. It participates in metabolic intermediate biosynthesis; 1-deoxy-D-xylulose 5-phosphate biosynthesis; 1-deoxy-D-xylulose 5-phosphate from D-glyceraldehyde 3-phosphate and pyruvate: step 1/1. In terms of biological role, catalyzes the acyloin condensation reaction between C atoms 2 and 3 of pyruvate and glyceraldehyde 3-phosphate to yield 1-deoxy-D-xylulose-5-phosphate (DXP). This is 1-deoxy-D-xylulose-5-phosphate synthase from Shigella boydii serotype 18 (strain CDC 3083-94 / BS512).